A 660-amino-acid polypeptide reads, in one-letter code: Bifunctional polymyxin resistance protein ArnA (660 aa).

Positions 1-304 (MKAVIFAYHD…ALGLVKGALL (304 aa)) are formyltransferase ArnAFT. His104 (proton donor; for formyltransferase activity) is an active-site residue. Residues Arg114 and 136 to 140 (TARAD) each bind (6R)-10-formyltetrahydrofolate. The interval 314–660 (RRTRVLILGV…QTVDLPDAAQ (347 aa)) is dehydrogenase ArnADH. Residues Asp347 and 368–369 (DI) contribute to the NAD(+) site. Residues Ala393, Tyr398, and 432-433 (TS) each bind UDP-alpha-D-glucuronate. Glu434 (proton acceptor; for decarboxylase activity) is an active-site residue. Residues Arg460, Asn492, 526–535 (KLVDGGAQKR), and Tyr613 contribute to the UDP-alpha-D-glucuronate site. The Proton donor; for decarboxylase activity role is filled by Arg619.

In the N-terminal section; belongs to the Fmt family. UDP-L-Ara4N formyltransferase subfamily. It in the C-terminal section; belongs to the NAD(P)-dependent epimerase/dehydratase family. UDP-glucuronic acid decarboxylase subfamily. Homohexamer, formed by a dimer of trimers.

It catalyses the reaction UDP-alpha-D-glucuronate + NAD(+) = UDP-beta-L-threo-pentopyranos-4-ulose + CO2 + NADH. The enzyme catalyses UDP-4-amino-4-deoxy-beta-L-arabinose + (6R)-10-formyltetrahydrofolate = UDP-4-deoxy-4-formamido-beta-L-arabinose + (6S)-5,6,7,8-tetrahydrofolate + H(+). Its pathway is nucleotide-sugar biosynthesis; UDP-4-deoxy-4-formamido-beta-L-arabinose biosynthesis; UDP-4-deoxy-4-formamido-beta-L-arabinose from UDP-alpha-D-glucuronate: step 1/3. It functions in the pathway nucleotide-sugar biosynthesis; UDP-4-deoxy-4-formamido-beta-L-arabinose biosynthesis; UDP-4-deoxy-4-formamido-beta-L-arabinose from UDP-alpha-D-glucuronate: step 3/3. It participates in bacterial outer membrane biogenesis; lipopolysaccharide biosynthesis. Its function is as follows. Bifunctional enzyme that catalyzes the oxidative decarboxylation of UDP-glucuronic acid (UDP-GlcUA) to UDP-4-keto-arabinose (UDP-Ara4O) and the addition of a formyl group to UDP-4-amino-4-deoxy-L-arabinose (UDP-L-Ara4N) to form UDP-L-4-formamido-arabinose (UDP-L-Ara4FN). The modified arabinose is attached to lipid A and is required for resistance to polymyxin and cationic antimicrobial peptides. The sequence is that of Bifunctional polymyxin resistance protein ArnA from Sodalis glossinidius (strain morsitans).